Reading from the N-terminus, the 405-residue chain is MADKVLKEKRRLFIRSVGTGTVNSLLDELLEKRVLNQEEMEKVRDENATVMDKARALIDAVIRKGPQACQIFIGHICEDDPHLAETLRLSSGPQSGNFLKTQDSQAVVHSSPALQAMPDDLAKLALSGPKVSLKLCSPEVVERIWKEKSAEMYPIMGKSMTRTRLALIICNTEFDNLSRRAGAEVDIASMKVLLEGLGYSVEVKENLTALDMTTELKAFAARPEHRSSDSTFLVFMSHGIREGICGKKFSEKVPDVLEVNTIFQIFNTRNCPNLRDKPKVIIIQACRGENQGVVWLKDSTGTSGNSSSLAPDDFEDDAIKKAHVEKDFIAFCSSTPDTVSWRSPTTGSVFIEKLIENLQEYAWSCDLEEIFRKVRLSFELPDARAQMPTAERVTLTRRFYLFPGH.

The CARD domain occupies 1–91 (MADKVLKEKR…HLAETLRLSS (91 aa)). The propeptide occupies 1-119 (MADKVLKEKR…SSPALQAMPD (119 aa)). Catalysis depends on residues His238 and Cys286. The propeptide occupies 299–317 (STGTSGNSSSLAPDDFEDD). At Ser303 the chain carries Phosphoserine.

This sequence belongs to the peptidase C14A family. In terms of assembly, heterotetramer that consists of two anti-parallel arranged heterodimers, each one formed by a 20 kDa (Caspase-1 subunit p20) and a 10 kDa (Caspase-1 subunit p10) subunit. May be a component of the inflammasome, a protein complex which also includes PYCARD, CARD8 and NLRP2 and whose function would be the activation of pro-inflammatory caspases. Component of the AIM2 PANoptosome complex, a multiprotein complex that drives inflammatory cell death (PANoptosis). Both the p10 and p20 subunits interact with MEFV. Interacts with CARD17P/INCA and CARD18. Interacts with SERPINB1; this interaction regulates CASP1 activity. As to quaternary structure, heterotetramer that consists of two anti-parallel arranged heterodimers, each one formed by a 20 kDa (Caspase-1 subunit p20) and a 10 kDa (Caspase-1 subunit p10) subunit. The two subunits are derived from the precursor sequence by an autocatalytic mechanism. Post-translationally, ubiquitinated via 'Lys-11'-linked polyubiquitination. Deubiquitinated by USP8.

The protein resides in the cytoplasm. Its subcellular location is the cell membrane. It carries out the reaction Strict requirement for an Asp residue at position P1 and has a preferred cleavage sequence of Tyr-Val-Ala-Asp-|-.. Thiol protease involved in a variety of inflammatory processes by proteolytically cleaving other proteins, such as the precursors of the inflammatory cytokines interleukin-1 beta (IL1B) and interleukin 18 (IL18) as well as the pyroptosis inducer Gasdermin-D (GSDMD), into active mature peptides. Plays a key role in cell immunity as an inflammatory response initiator: once activated through formation of an inflammasome complex, it initiates a pro-inflammatory response through the cleavage of the two inflammatory cytokines IL1B and IL18, releasing the mature cytokines which are involved in a variety of inflammatory processes. Cleaves a tetrapeptide after an Asp residue at position P1. Also initiates pyroptosis, a programmed lytic cell death pathway, through cleavage of GSDMD. In contrast to cleavage of interleukin IL1B, recognition and cleavage of GSDMD is not strictly dependent on the consensus cleavage site but depends on an exosite interface on CASP1 that recognizes and binds the Gasdermin-D, C-terminal (GSDMD-CT) part. Cleaves and activates CASP7 in response to bacterial infection, promoting plasma membrane repair. Upon inflammasome activation, during DNA virus infection but not RNA virus challenge, controls antiviral immunity through the cleavage of CGAS, rendering it inactive. In apoptotic cells, cleaves SPHK2 which is released from cells and remains enzymatically active extracellularly. This Equus caballus (Horse) protein is Caspase-1 (CASP1).